The following is a 775-amino-acid chain: Armadillo-like helical domain-containing protein 4 (775 aa).

A signal peptide spans 1-47; it reads MLQDSITGIVNSFNLFFPSTMSRPTLMPTCVAFCSILFLTLATGCQA. Residues 48–715 lie on the Extracellular side of the membrane; the sequence is FPKVERRETA…KDKAGYMSGM (668 aa). A glycan (N-linked (GlcNAc...) asparagine) is linked at asparagine 76. Disordered regions lie at residues 120 to 148, 247 to 273, and 324 to 366; these read AGLL…PGPS, VPGV…DGQS, and KFES…PSST. The span at 129-142 shows a compositional bias: polar residues; sequence GVYSSSEPVVSASE. The span at 324–335 shows a compositional bias: basic and acidic residues; that stretch reads KFESISRGRPPE. N-linked (GlcNAc...) asparagine glycosylation occurs at asparagine 476. The tract at residues 559-669 is disordered; it reads IPVLGSPMAP…PGITSQEPDI (111 aa). Positions 577–599 are enriched in polar residues; sequence TISSALPSEGRTSPSISRPNTAA. Over residues 606-640 the composition is skewed to acidic residues; that stretch reads LESEEVEDDEDEEDEEDEEEEEEDEEDEEDEEDKE. A helical transmembrane segment spans residues 716-736; sequence LVPVGVGIAGALFILGALYSI. The Cytoplasmic segment spans residues 737–775; the sequence is KVMNRRRRNGFKRHKRKQREFNSMQDRVMLLADSSEDEF. Phosphoserine is present on residues serine 770 and serine 771.

In terms of assembly, interacts with IL6ST; this interaction prevents IL6ST protein homodimerization and bridges ARMH4 with IL6R and STAT3 and therefore inhibits phosphorylation of STAT3 at 'Tyr-705'. Interacts (via cytoplasmic tail) with RICTOR; this interaction bridges ARMH4 to the mTORC2 complex and inhibits the mTORC2 kinase activity. As to expression, expressed in bone-marroew cells.

It localises to the membrane. Its function is as follows. May modulate immune response and may play a role in inflammation. Down-modulates STAT3 signaling throught direct interaction with IL6ST, resulting in the inhibition of phosphorylation of STAT3 at 'Tyr-705'. May negatively regulates AKT signaling by modulating the activity of mTORC2 complex through RICTOR interaction. This chain is Armadillo-like helical domain-containing protein 4, found in Mus musculus (Mouse).